We begin with the raw amino-acid sequence, 460 residues long: Nucleosome assembly protein 1-like 2 (460 aa).

Basic and acidic residues-rich tracts occupy residues methionine 1–serine 11 and leucine 27–aspartate 36. Disordered regions lie at residues methionine 1 to proline 88 and glutamate 214 to lysine 238. Positions glutamate 214 to aspartate 236 are enriched in acidic residues. The Nuclear localization signal signature appears at isoleucine 346–histidine 352.

Belongs to the nucleosome assembly protein (NAP) family.

It localises to the nucleus. Acidic protein which may be involved in interactions with other proteins or DNA. In Homo sapiens (Human), this protein is Nucleosome assembly protein 1-like 2 (NAP1L2).